The chain runs to 61 residues: Protein A40 homolog (61 aa).

Over 1 to 11 the chain is Cytoplasmic; the sequence is MTMNKPKTNYA. The helical; Signal-anchor for type II membrane protein transmembrane segment at 12-32 threads the bilayer; that stretch reads GYACCVICGLIVGIIFTATLL. Over 33 to 61 the chain is Extracellular; it reads KAVERKLIHTPLIDKTIKDAYIREDCPTD.

It belongs to the poxviridae A40 protein family.

It is found in the host membrane. The protein is Protein A40 homolog (A45R) of Homo sapiens (Human).